The primary structure comprises 230 residues: 7-cyano-7-deazaguanine synthase (230 aa).

9–19 is a binding site for ATP; sequence YSGGLDSTTCL. Cys190, Cys200, Cys203, and Cys206 together coordinate Zn(2+).

The protein belongs to the QueC family. Requires Zn(2+) as cofactor.

It carries out the reaction 7-carboxy-7-deazaguanine + NH4(+) + ATP = 7-cyano-7-deazaguanine + ADP + phosphate + H2O + H(+). Its pathway is purine metabolism; 7-cyano-7-deazaguanine biosynthesis. Functionally, catalyzes the ATP-dependent conversion of 7-carboxy-7-deazaguanine (CDG) to 7-cyano-7-deazaguanine (preQ(0)). This is 7-cyano-7-deazaguanine synthase from Syntrophotalea carbinolica (strain DSM 2380 / NBRC 103641 / GraBd1) (Pelobacter carbinolicus).